The sequence spans 258 residues: Deoxyribose-phosphate aldolase (258 aa).

D101 functions as the Proton donor/acceptor in the catalytic mechanism. Residue K166 is the Schiff-base intermediate with acetaldehyde of the active site. K200 (proton donor/acceptor) is an active-site residue.

It belongs to the DeoC/FbaB aldolase family. DeoC type 2 subfamily.

It is found in the cytoplasm. It catalyses the reaction 2-deoxy-D-ribose 5-phosphate = D-glyceraldehyde 3-phosphate + acetaldehyde. It functions in the pathway carbohydrate degradation; 2-deoxy-D-ribose 1-phosphate degradation; D-glyceraldehyde 3-phosphate and acetaldehyde from 2-deoxy-alpha-D-ribose 1-phosphate: step 2/2. Functionally, catalyzes a reversible aldol reaction between acetaldehyde and D-glyceraldehyde 3-phosphate to generate 2-deoxy-D-ribose 5-phosphate. The protein is Deoxyribose-phosphate aldolase of Actinobacillus pleuropneumoniae serotype 5b (strain L20).